The primary structure comprises 502 residues: N-fatty-acyl-amino acid synthase/hydrolase PM20D1 (502 aa).

Residues 1-25 (MAQRCVCVLALVAMLLLVFPTVSRS) form the signal peptide. Zn(2+) is bound at residue histidine 125. The active site involves aspartate 127. A Zn(2+)-binding site is contributed by aspartate 157. Glutamate 191 acts as the Proton acceptor in catalysis. Zn(2+)-binding residues include glutamate 192 and aspartate 217. An N-linked (GlcNAc...) asparagine glycan is attached at asparagine 252. Histidine 464 lines the Zn(2+) pocket.

This sequence belongs to the peptidase M20A family. Requires Zn(2+) as cofactor.

The protein resides in the secreted. It carries out the reaction an N-acyl-L-amino acid + H2O = an L-alpha-amino acid + a carboxylate. The catalysed reaction is an N-acyl-aromatic L-alpha-amino acid + H2O = an aromatic L-alpha-amino acid + a carboxylate. The enzyme catalyses L-phenylalanine + (9Z)-octadecenoate = N-(9Z-octadecenoyl)-L-phenylalanine + H2O. It catalyses the reaction N-(9Z-octadecenoyl)-L-leucine + H2O = L-leucine + (9Z)-octadecenoate. It carries out the reaction N-(5Z,8Z,11Z,14Z)-eicosatetraenoyl-glycine + H2O = (5Z,8Z,11Z,14Z)-eicosatetraenoate + glycine. The catalysed reaction is N-hexadecanoyl-L-phenylalanine + H2O = hexadecanoate + L-phenylalanine. The enzyme catalyses N-octadecanoyl-L-phenylalanine + H2O = octadecanoate + L-phenylalanine. It catalyses the reaction N-(4Z,7Z,10Z,13Z,16Z,19Z-docosahexaenoyl)-L-phenylalanine + H2O = (4Z,7Z,10Z,13Z,16Z,19Z)-docosahexaenoate + L-phenylalanine. It carries out the reaction N-(9Z-octadecenoyl)-L-asparagine + H2O = L-asparagine + (9Z)-octadecenoate. The catalysed reaction is (9Z)-octadecenoate + glycine = N-(9Z-octadecenoyl)glycine + H2O. The enzyme catalyses N-(9Z-octadecenoyl)-L-lysine + H2O = L-lysine + (9Z)-octadecenoate. It catalyses the reaction N-(9Z-octadecenoyl)-L-methionine + H2O = (9Z)-octadecenoate + L-methionine. It carries out the reaction N-(9Z-octadecenoyl)-L-serine + H2O = L-serine + (9Z)-octadecenoate. The catalysed reaction is N-(9Z-octadecenoyl)-L-tryptophan + H2O = L-tryptophan + (9Z)-octadecenoate. The enzyme catalyses N-(9Z-octadecenoyl)-L-tyrosine + H2O = L-tyrosine + (9Z)-octadecenoate. It catalyses the reaction N-(9Z-octadecenoyl)-L-glutamine + H2O = L-glutamine + (9Z)-octadecenoate. It carries out the reaction N-(5Z,8Z,11Z,14Z-eicosatetraenoyl)-L-serine + H2O = (5Z,8Z,11Z,14Z)-eicosatetraenoate + L-serine. The catalysed reaction is (5Z,8Z,11Z,14Z)-eicosatetraenoate + L-phenylalanine = N-(5Z,8Z,11Z,14Z-eicosatetraenoyl)-L-phenylalanine + H2O. It functions in the pathway amino-acid metabolism. Its pathway is energy metabolism. The protein operates within lipid metabolism; fatty acid metabolism. Lipoproteins are powerful coactivators of PM20D1 activity in vitro and NAA biosynthesis in vivo. Secreted enzyme that regulates the endogenous N-fatty acyl amino acid (NAAs) tissue and circulating levels by functioning as a bidirectional NAA synthase/hydrolase. It condenses free fatty acids and free amino acids to generate NAAs and bidirectionally catalyzes the reverse hydrolysis reaction. Some of these NAAs stimulate oxidative metabolism via mitochondrial uncoupling, increasing energy expenditure in a UPC1-independent manner. Thereby, this secreted protein may indirectly regulate whole body energy expenditure. PM20D1 circulates in tight association with both low- and high-density (LDL and HDL,respectively) lipoprotein particles. The polypeptide is N-fatty-acyl-amino acid synthase/hydrolase PM20D1 (Homo sapiens (Human)).